The chain runs to 198 residues: Small ribosomal subunit protein uS4 (198 aa).

Positions Leu-26 to Asn-45 are disordered. The S4 RNA-binding domain occupies Ser-91–Leu-154.

Belongs to the universal ribosomal protein uS4 family. Part of the 30S ribosomal subunit. Contacts protein S5. The interaction surface between S4 and S5 is involved in control of translational fidelity.

Its function is as follows. One of the primary rRNA binding proteins, it binds directly to 16S rRNA where it nucleates assembly of the body of the 30S subunit. In terms of biological role, with S5 and S12 plays an important role in translational accuracy. The chain is Small ribosomal subunit protein uS4 from Acholeplasma laidlawii (strain PG-8A).